Here is a 268-residue protein sequence, read N- to C-terminus: 4-hydroxy-tetrahydrodipicolinate reductase (268 aa).

9 to 14 (GCSGRM) is a binding site for NAD(+). Arg-36 contributes to the NADP(+) binding site. Residues 98 to 100 (GTT) and 122 to 125 (APNT) each bind NAD(+). The active-site Proton donor/acceptor is the His-155. (S)-2,3,4,5-tetrahydrodipicolinate is bound at residue His-156. The active-site Proton donor is the Lys-159. Residue 165-166 (GT) coordinates (S)-2,3,4,5-tetrahydrodipicolinate.

Belongs to the DapB family.

The protein resides in the cytoplasm. The catalysed reaction is (S)-2,3,4,5-tetrahydrodipicolinate + NAD(+) + H2O = (2S,4S)-4-hydroxy-2,3,4,5-tetrahydrodipicolinate + NADH + H(+). It carries out the reaction (S)-2,3,4,5-tetrahydrodipicolinate + NADP(+) + H2O = (2S,4S)-4-hydroxy-2,3,4,5-tetrahydrodipicolinate + NADPH + H(+). The protein operates within amino-acid biosynthesis; L-lysine biosynthesis via DAP pathway; (S)-tetrahydrodipicolinate from L-aspartate: step 4/4. Functionally, catalyzes the conversion of 4-hydroxy-tetrahydrodipicolinate (HTPA) to tetrahydrodipicolinate. The chain is 4-hydroxy-tetrahydrodipicolinate reductase from Colwellia psychrerythraea (strain 34H / ATCC BAA-681) (Vibrio psychroerythus).